A 499-amino-acid polypeptide reads, in one-letter code: Serine/threonine-protein phosphatase 5 (499 aa).

Residues 1–23 are disordered; the sequence is MAMAEGERTECAEPPRDEPPAEG. A2 carries the post-translational modification N-acetylalanine. TPR repeat units lie at residues 28-61, 62-95, and 96-129; these read AEELKTQANDYFKAKDYENAIKFYSQAIELNPSN, AIYYGNRSLAYLRTECYGYALGDATRAIELDKKY, and IKGYYRRAASNMALGKFRAALRDYETVVKVKPND. Positions 200–499 are catalytic; it reads DQKKLHRKCA…ANTLLQLGMM (300 aa). Mg(2+)-binding residues include D242, H244, and D271. H244 lines the substrate pocket. Substrate contacts are provided by residues R275 and 303 to 304; that span reads NH. N303 is a Mg(2+) binding site. Catalysis depends on H304, which acts as the Proton donor/acceptor. H352 is a Mg(2+) binding site. Substrate is bound by residues R400 and H427. H427 contacts Mg(2+). The tract at residues 495-499 is required for autoinhibition; it reads QLGMM.

It belongs to the PPP phosphatase family. PP-5 (PP-T) subfamily. In terms of assembly, probably forms a complex composed of chaperones HSP90 and HSP70, co-chaperones STIP1/HOP, CDC37, PPP5C, PTGES3/p23, TSC1 and client protein TSC2. Probably forms a complex composed of chaperones HSP90 and HSP70, co-chaperones CDC37, PPP5C, TSC1 and client protein TSC2, CDK4, AKT, RAF1 and NR3C1; this complex does not contain co-chaperones STIP1/HOP and PTGES3/p23. Part of a complex with HSP90/HSP90AA1 and steroid receptors. Interacts (via TPR repeats) with HSP90AA1 (via TPR repeat-binding motif) or HSPA1A/HSPA1B; the interaction is direct and activates the phosphatase activity. Dissociates from HSPA1A/HSPA1B and HSP90AA1 in response to arachidonic acid. Interacts with CPNE1 (via VWFA domain). Interacts with CDC16, CDC27. Interacts with KLHDC10 (via the 6 Kelch repeats); inhibits the phosphatase activity on MAP3K5. Interacts with ATM and ATR; both interactions are induced by DNA damage and enhance ATM and ATR kinase activity. Interacts with RAD17; reduced by DNA damage. Interacts with nuclear receptors such as NR3C1/GCR and PPARG (activated by agonist); regulates their transactivation activities. Interacts (via TPR repeats) with S100 proteins S100A1, S100A2, S100A6, S100B and S100P; the interactions are calcium-dependent, strongly activate PPP5C phosphatase activity and compete with HSP90AA1 and MAP3K5 interactions. Interacts with SMAD2 and SMAD3 but not with SMAD1; decreases SMAD3 phosphorylation and protein levels. Interacts (via TPR repeats) with CRY1 and CRY2; the interaction with CRY2 down-regulates the phosphatase activity on CSNK1E. Interacts (via TPR repeats) with the active form of RAC1, GNA12 or GNA13; these interactions activate the phosphatase activity and translocate PPP5C to the cell membrane. Interacts with FLCN. It depends on Mg(2+) as a cofactor. The cofactor is Mn(2+). Post-translationally, activated by at least two different proteolytic cleavages producing a 56 kDa and a 50 kDa form. In terms of tissue distribution, predominantly found in brain and, in lower levels, in testis, but was nearly undetectable in spleen, lung, skeletal muscle, kidney and liver.

It is found in the nucleus. The protein localises to the cytoplasm. It localises to the cell membrane. It carries out the reaction O-phospho-L-seryl-[protein] + H2O = L-seryl-[protein] + phosphate. It catalyses the reaction O-phospho-L-threonyl-[protein] + H2O = L-threonyl-[protein] + phosphate. With respect to regulation, autoinhibited. In the autoinhibited state, the TPR domain interacts with the catalytic region and prevents substrate access to the catalytic pocket. Allosterically activated by various polyunsaturated fatty acids, free long-chain fatty-acids and long-chain fatty acyl-CoA esters, arachidonic acid being the most effective activator. HSP90A and probably RAC1, GNA12 and GNA13 can also release the autoinhibition by the TPR repeat. Activation by RAC1, GNA12 and GNA13 is synergistic with the one produced by fatty acids binding. Inhibited by okadaic acid. Its function is as follows. Serine/threonine-protein phosphatase that dephosphorylates a myriad of proteins involved in different signaling pathways including the kinases CSNK1E, ASK1/MAP3K5, PRKDC and RAF1, the nuclear receptors NR3C1, PPARG, ESR1 and ESR2, SMAD proteins and TAU/MAPT. Implicated in wide ranging cellular processes, including apoptosis, differentiation, DNA damage response, cell survival, regulation of ion channels or circadian rhythms, in response to steroid and thyroid hormones, calcium, fatty acids, TGF-beta as well as oxidative and genotoxic stresses. Participates in the control of DNA damage response mechanisms such as checkpoint activation and DNA damage repair through, for instance, the regulation ATM/ATR-signaling and dephosphorylation of PRKDC and TP53BP1. Inhibits ASK1/MAP3K5-mediated apoptosis induced by oxidative stress. Plays a positive role in adipogenesis, mainly through the dephosphorylation and activation of PPARG transactivation function. Also dephosphorylates and inhibits the anti-adipogenic effect of NR3C1. Regulates the circadian rhythms, through the dephosphorylation and activation of CSNK1E. May modulate TGF-beta signaling pathway by the regulation of SMAD3 phosphorylation and protein expression levels. Dephosphorylates and may play a role in the regulation of TAU/MAPT. Through their dephosphorylation, may play a role in the regulation of ions channels such as KCNH2. Dephosphorylate FNIP1, disrupting interaction with HSP90AA1/Hsp90. This chain is Serine/threonine-protein phosphatase 5 (Ppp5c), found in Rattus norvegicus (Rat).